Consider the following 853-residue polypeptide: MICAL-like protein 1 (853 aa).

Positions 2-108 (AGPRGALLAW…YVSQYYNHFA (107 aa)) constitute a Calponin-homology (CH) domain. Disordered stretches follow at residues 118-162 (PRKG…TPSS) and 224-659 (SGRS…FPLI). Polar residues predominate over residues 145 to 162 (ECSSGSLSKQGSHRTPSS). Residues 162–224 (STCAACQQHV…AEHCARLGPS (63 aa)) form the LIM zinc-binding domain. Ser292 and Ser306 each carry phosphoserine. Residues Thr312 and Thr315 each carry the phosphothreonine modification. Residues 355 to 366 (LSERTPAPRKDP) show a composition bias toward basic and acidic residues. Pro residues predominate over residues 381-394 (APLPPSSSPGPPPG). Position 388 is a phosphoserine (Ser388). An NPF1 motif is present at residues 419–421 (NPF). Over residues 429–445 (PAAPSPAPGPAPTPPES) the composition is skewed to pro residues. 2 positions are modified to phosphothreonine: Thr457 and Thr459. A phosphoserine mark is found at Ser460, Ser461, Ser474, and Ser476. 2 stretches are compositionally biased toward low complexity: residues 495-515 (PSPA…APSE) and 541-553 (SASL…LSSS). Phosphoserine is present on residues Ser568 and Ser611. Polar residues predominate over residues 607–618 (PGTSSPQLQVKS). The NPF2 signature appears at 623-625 (NPF). The tract at residues 642-853 (KGSKPARPPA…TKSKCPGDRS (212 aa)) is mediates the interaction with RAB13 and RAB35 and intramolecular interaction with the CH domain. The bMERB domain occupies 661 to 808 (RKVQSDQYIP…EEEEDKMLEA (148 aa)). Residues 671 to 701 (EEDIHGEIDTIERQLDALEHRGVLLEEKLRG) are a coiled coil. Residues 690 to 853 (HRGVLLEEKL…TKSKCPGDRS (164 aa)) form a necessary and sufficient to associate with tubular recycling endosome membranes, mediate phosphatidic acid-binding and membrane tubulation region. At Ser730 the chain carries Phosphoserine. Positions 791-820 (CLDEDRQREEEEDKMLEAMIKKKEFQKETE) form a coiled coil.

As to quaternary structure, homooligomer. Interacts (via NPF1 motif) with EHD1 (via EH domain); the interaction is direct and probably recruits EHD1 to membranes. Interacts with EHD3 (via EH domain). Interacts with RAB35 (GTP-bound form); the interaction is direct and probably recruits MICALL1 to membranes. Interacts with ACAP2; the interaction is indirect through RAB35. Interacts with RAB8A (GTP-bound form); regulates RAB8A association with recycling endosomes. Interacts with RAB13 (GTP-bound form). Interacts with ARF6 (GTP-bound form). Interacts with PACSIN2 (via the SH3 domain). Interacts with DPYSL2.

It localises to the recycling endosome membrane. It is found in the late endosome membrane. Its subcellular location is the cell projection. The protein localises to the cilium membrane. The protein resides in the cytoplasm. It localises to the cytoskeleton. It is found in the microtubule organizing center. Its subcellular location is the centrosome. The protein localises to the centriole. Its function is as follows. Lipid-binding protein with higher affinity for phosphatidic acid, a lipid enriched in recycling endosome membranes. On endosome membranes, acts as a downstream effector of Rab proteins recruiting cytosolic proteins to regulate membrane tubulation. Involved in a late step of receptor-mediated endocytosis regulating for instance endocytosed-EGF receptor trafficking. Alternatively, regulates slow endocytic recycling of endocytosed proteins back to the plasma membrane. Also involved in cargo protein delivery to the plasma membrane. Plays a role in ciliogenesis coordination, recruits EHD1 to primary cilium where it is anchored to the centriole through interaction with tubulins. May indirectly play a role in neurite outgrowth. The sequence is that of MICAL-like protein 1 (MICALL1) from Bos taurus (Bovine).